A 566-amino-acid chain; its full sequence is Proline--tRNA ligase (566 aa).

Belongs to the class-II aminoacyl-tRNA synthetase family. ProS type 1 subfamily. In terms of assembly, homodimer.

The protein resides in the cytoplasm. The catalysed reaction is tRNA(Pro) + L-proline + ATP = L-prolyl-tRNA(Pro) + AMP + diphosphate. Catalyzes the attachment of proline to tRNA(Pro) in a two-step reaction: proline is first activated by ATP to form Pro-AMP and then transferred to the acceptor end of tRNA(Pro). As ProRS can inadvertently accommodate and process non-cognate amino acids such as alanine and cysteine, to avoid such errors it has two additional distinct editing activities against alanine. One activity is designated as 'pretransfer' editing and involves the tRNA(Pro)-independent hydrolysis of activated Ala-AMP. The other activity is designated 'posttransfer' editing and involves deacylation of mischarged Ala-tRNA(Pro). The misacylated Cys-tRNA(Pro) is not edited by ProRS. The protein is Proline--tRNA ligase of Bacillus cereus (strain B4264).